Here is a 257-residue protein sequence, read N- to C-terminus: uncharacterized protein (257 aa).

The signal sequence occupies residues 1–22 (MIHSRKLRLWLYLVLLAVFIGA). Residue C23 is the site of N-palmitoyl cysteine attachment. C23 carries S-diacylglycerol cysteine lipidation.

Belongs to the staphylococcal tandem lipoprotein family.

It localises to the cell membrane. This is an uncharacterized protein from Staphylococcus aureus (strain Mu50 / ATCC 700699).